Reading from the N-terminus, the 490-residue chain is GTPase Der (490 aa).

EngA-type G domains are found at residues 3–166 (PVIA…PKDE) and 196–369 (IKIA…KSAV). GTP contacts are provided by residues 9–16 (GRPNVGKS), 56–60 (DTGGI), 118–121 (NKID), 202–209 (GRPNVGKS), 249–253 (DTAGV), and 314–317 (NKWD). In terms of domain architecture, KH-like spans 370–454 (TRWPTSRLTQ…PIRIEFKGGE (85 aa)). The interval 452 to 490 (GGENPYEGNKNTLTDRQVNKKRRMMSHHKKADKKRRDKR) is disordered. Over residues 470-490 (NKKRRMMSHHKKADKKRRDKR) the composition is skewed to basic residues.

Belongs to the TRAFAC class TrmE-Era-EngA-EngB-Septin-like GTPase superfamily. EngA (Der) GTPase family. Associates with the 50S ribosomal subunit.

Functionally, GTPase that plays an essential role in the late steps of ribosome biogenesis. This is GTPase Der from Pseudomonas savastanoi pv. phaseolicola (strain 1448A / Race 6) (Pseudomonas syringae pv. phaseolicola (strain 1448A / Race 6)).